A 349-amino-acid polypeptide reads, in one-letter code: Hydroxymethylglutaryl-CoA synthase (349 aa).

Residue Asp-30 coordinates (3S)-3-hydroxy-3-methylglutaryl-CoA. The active-site Proton donor/acceptor is Glu-82. Cys-114 contacts (3S)-3-hydroxy-3-methylglutaryl-CoA. Cys-114 serves as the catalytic Acyl-thioester intermediate. Arg-203 contributes to the CoA binding site. Thr-205 and His-238 together coordinate (3S)-3-hydroxy-3-methylglutaryl-CoA. His-238 (proton donor/acceptor) is an active-site residue. Position 243 (Lys-243) interacts with CoA. Residues Lys-247, Asn-270, and Ser-300 each contribute to the (3S)-3-hydroxy-3-methylglutaryl-CoA site.

This sequence belongs to the thiolase-like superfamily. Archaeal HMG-CoA synthase family. In terms of assembly, interacts with acetoacetyl-CoA thiolase that catalyzes the precedent step in the pathway and with a DUF35 protein. The acetoacetyl-CoA thiolase/HMG-CoA synthase complex channels the intermediate via a fused CoA-binding site, which allows for efficient coupling of the endergonic thiolase reaction with the exergonic HMGCS reaction.

The enzyme catalyses acetoacetyl-CoA + acetyl-CoA + H2O = (3S)-3-hydroxy-3-methylglutaryl-CoA + CoA + H(+). It functions in the pathway metabolic intermediate biosynthesis; (R)-mevalonate biosynthesis; (R)-mevalonate from acetyl-CoA: step 2/3. In terms of biological role, catalyzes the condensation of acetyl-CoA with acetoacetyl-CoA to form 3-hydroxy-3-methylglutaryl-CoA (HMG-CoA). Functions in the mevalonate (MVA) pathway leading to isopentenyl diphosphate (IPP), a key precursor for the biosynthesis of isoprenoid compounds that are building blocks of archaeal membrane lipids. This chain is Hydroxymethylglutaryl-CoA synthase, found in Methanothermococcus thermolithotrophicus (Methanococcus thermolithotrophicus).